Consider the following 339-residue polypeptide: D-alanine--D-alanine ligase (339 aa).

The region spanning 126-333 (KQVLDSAGIP…YSELVTRLVE (208 aa)) is the ATP-grasp domain. Residue 158-213 (AAELGYPLFVKPANLGSSVGISKVGSPEELDAALTLAFGLDRRVILEAMTPHKPRE) coordinates ATP. Mg(2+) is bound by residues aspartate 286, glutamate 300, and asparagine 302.

Belongs to the D-alanine--D-alanine ligase family. Mg(2+) serves as cofactor. Requires Mn(2+) as cofactor.

It is found in the cytoplasm. It catalyses the reaction 2 D-alanine + ATP = D-alanyl-D-alanine + ADP + phosphate + H(+). It functions in the pathway cell wall biogenesis; peptidoglycan biosynthesis. Cell wall formation. This is D-alanine--D-alanine ligase from Deinococcus radiodurans (strain ATCC 13939 / DSM 20539 / JCM 16871 / CCUG 27074 / LMG 4051 / NBRC 15346 / NCIMB 9279 / VKM B-1422 / R1).